The following is an 864-amino-acid chain: Carbohydrate-responsive element-binding protein (864 aa).

Disordered regions lie at residues 15-41 and 53-77; these read PRVV…AGGL and MVSS…LADF. Phosphoserine is present on residues Ser20, Ser23, and Ser25. At Thr27 the chain carries Phosphothreonine. Position 196 is a phosphoserine (Ser196). Disordered regions lie at residues 332–397, 449–468, 489–533, 547–570, and 583–602; these read SSGI…APGP, PGVS…QPGP, PHFT…TARD, PEQA…PQDT, and PIPA…LAPP. Polar residues predominate over residues 351 to 368; the sequence is GMTPHSGNTRLQARNSCS. Low complexity predominate over residues 513–531; sequence ASPPTLASATASPTATATA. Phosphoserine; by AMPK is present on Ser566. A compositionally biased stretch (pro residues) spans 583–596; that stretch reads PIPAPTPPRPPPGP. Phosphoserine occurs at positions 614, 626, and 643. Residues 661 to 715 enclose the bHLH domain; that stretch reads NRRITHISAEQKRRFNIKLGFDTLHGLVSTLSAQPSLKVSKATTLQKTAEYILML. The tract at residues 715-736 is leucine-zipper; sequence LQQERAAMQEEAQQLRDEIEEL.

In terms of assembly, binds DNA as a heterodimer with TCFL4/MLX. In terms of processing, phosphorylation at Ser-566 by AMPK inactivates the DNA-binding activity. In terms of tissue distribution, expressed in the ventricular and intermediate zones of the developing spinal cord of 12.5 dpc embryos. In later embryos expressed in a variety of tissues.

It is found in the nucleus. Its function is as follows. Transcriptional repressor. Binds to the canonical and non-canonical E box sequences 5'-CACGTG-3'. This is Carbohydrate-responsive element-binding protein (Mlxipl) from Mus musculus (Mouse).